The following is a 282-amino-acid chain: Bis(5'-nucleosyl)-tetraphosphatase, symmetrical (282 aa).

Belongs to the Ap4A hydrolase family.

The catalysed reaction is P(1),P(4)-bis(5'-adenosyl) tetraphosphate + H2O = 2 ADP + 2 H(+). Hydrolyzes diadenosine 5',5'''-P1,P4-tetraphosphate to yield ADP. The sequence is that of Bis(5'-nucleosyl)-tetraphosphatase, symmetrical from Shigella dysenteriae serotype 1 (strain Sd197).